Reading from the N-terminus, the 321-residue chain is uncharacterized protein (321 aa).

This sequence belongs to the NAD(P)-dependent epimerase/dehydratase family.

This is an uncharacterized protein from Staphylococcus aureus (strain bovine RF122 / ET3-1).